The chain runs to 93 residues: Small ribosomal subunit protein bS18 (93 aa).

This sequence belongs to the bacterial ribosomal protein bS18 family. Part of the 30S ribosomal subunit. Forms a tight heterodimer with protein bS6.

In terms of biological role, binds as a heterodimer with protein bS6 to the central domain of the 16S rRNA, where it helps stabilize the platform of the 30S subunit. The protein is Small ribosomal subunit protein bS18 of Acidovorax ebreus (strain TPSY) (Diaphorobacter sp. (strain TPSY)).